Here is an 80-residue protein sequence, read N- to C-terminus: Large ribosomal subunit protein bL31B (80 aa).

It belongs to the bacterial ribosomal protein bL31 family. Type B subfamily. Part of the 50S ribosomal subunit.

The chain is Large ribosomal subunit protein bL31B from Xylella fastidiosa (strain 9a5c).